We begin with the raw amino-acid sequence, 191 residues long: Ribosomal RNA small subunit methyltransferase G (191 aa).

Residues Gly62, Phe67, Ile111 to Glu112, and Arg124 contribute to the S-adenosyl-L-methionine site.

This sequence belongs to the methyltransferase superfamily. RNA methyltransferase RsmG family.

It is found in the cytoplasm. The catalysed reaction is guanosine(527) in 16S rRNA + S-adenosyl-L-methionine = N(7)-methylguanosine(527) in 16S rRNA + S-adenosyl-L-homocysteine. In terms of biological role, specifically methylates the N7 position of guanine in position 527 of 16S rRNA. The chain is Ribosomal RNA small subunit methyltransferase G from Rickettsia prowazekii (strain Madrid E).